A 255-amino-acid polypeptide reads, in one-letter code: Reticulon-like protein B3 (255 aa).

Over residues 1-25 (MAEEHKHEESIMEKISEKIHGHDDS) the composition is skewed to basic and acidic residues. The disordered stretch occupies residues 1–38 (MAEEHKHEESIMEKISEKIHGHDDSSSSSSDSDDDKNS). Position 2 is an N-acetylalanine (Ala-2). Residues 64-255 (PADIFLWRNK…GAFAFIKKKD (192 aa)) form the Reticulon domain. A run of 3 helical transmembrane segments spans residues 75 to 95 (VSGG…LLEY), 97 to 117 (LLTL…LWSS), and 186 to 206 (CNFL…PVLY).

The protein localises to the endoplasmic reticulum membrane. It is found in the vacuole membrane. This is Reticulon-like protein B3 (RTNLB3) from Arabidopsis thaliana (Mouse-ear cress).